Here is a 43-residue protein sequence, read N- to C-terminus: Protein PsbN (43 aa).

The helical transmembrane segment at 5–27 (TLVAISISRLLVSFTGYALYTAF) threads the bilayer.

It belongs to the PsbN family.

The protein localises to the plastid. It is found in the chloroplast thylakoid membrane. In terms of biological role, may play a role in photosystem I and II biogenesis. This Cycas taitungensis (Prince sago) protein is Protein PsbN.